The chain runs to 296 residues: Homoserine kinase (296 aa).

Position 85–95 (Pro-85–Ala-95) interacts with ATP.

It belongs to the GHMP kinase family. Homoserine kinase subfamily.

The protein localises to the cytoplasm. The catalysed reaction is L-homoserine + ATP = O-phospho-L-homoserine + ADP + H(+). The protein operates within amino-acid biosynthesis; L-threonine biosynthesis; L-threonine from L-aspartate: step 4/5. Its function is as follows. Catalyzes the ATP-dependent phosphorylation of L-homoserine to L-homoserine phosphate. In Clostridium acetobutylicum (strain ATCC 824 / DSM 792 / JCM 1419 / IAM 19013 / LMG 5710 / NBRC 13948 / NRRL B-527 / VKM B-1787 / 2291 / W), this protein is Homoserine kinase.